A 667-amino-acid polypeptide reads, in one-letter code: Acetolactate synthase 1, chloroplastic (667 aa).

Residues 1–35 (MAAAAPSPSSSAFSKTLSPSSSTSSTLLPRSTFPF) are compositionally biased toward low complexity. The tract at residues 1-45 (MAAAAPSPSSSAFSKTLSPSSSTSSTLLPRSTFPFPHHPHKTTPP) is disordered. A chloroplast-targeting transit peptide spans 1-94 (MAAAAPSPSS…VSRFAPDEPR (94 aa)). Glu141 contacts thiamine diphosphate. An intrachain disulfide couples Cys161 to Cys307. FAD-binding positions include Arg243, 349–370 (HGTVYANYAVDSSDLLLAFGVR), and 392–411 (DIDSAEIGKNKQPHVSICAD). Residues 484–564 (QHQMWAAQYY…VKIMLLNNQH (81 aa)) are thiamine pyrophosphate binding. The Mg(2+) site is built by Asp535 and Asn562.

Belongs to the TPP enzyme family. Mg(2+) is required as a cofactor. The cofactor is thiamine diphosphate.

It localises to the plastid. Its subcellular location is the chloroplast. The enzyme catalyses 2 pyruvate + H(+) = (2S)-2-acetolactate + CO2. Its pathway is amino-acid biosynthesis; L-isoleucine biosynthesis; L-isoleucine from 2-oxobutanoate: step 1/4. It functions in the pathway amino-acid biosynthesis; L-valine biosynthesis; L-valine from pyruvate: step 1/4. In Nicotiana tabacum (Common tobacco), this protein is Acetolactate synthase 1, chloroplastic (ALS SURA).